The following is a 218-amino-acid chain: Sodium channel regulatory subunit beta-1 (218 aa).

The N-terminal stretch at 1–18 (MGTLLALVVGAALVSSAW) is a signal peptide. Residues 19-157 (GGCVEVDSET…DKANRDMASI (139 aa)) are Extracellular-facing. Cystine bridges form between C21–C43 and C40–C121. An Ig-like C2-type domain is found at 22 to 150 (VEVDSETEAV…KIHIEVVDKA (129 aa)). 4 N-linked (GlcNAc...) asparagine glycosylation sites follow: N93, N110, N114, and N135. A helical membrane pass occupies residues 158–179 (VSEIMMYVLIVVLTIWLVAEMV). The Cytoplasmic portion of the chain corresponds to 180–218 (YCYKKIAAATEAAAQENASEYLAITSESKENCTGVQVAE).

This sequence belongs to the sodium channel auxiliary subunit SCN1B (TC 8.A.17) family. A voltage-gated sodium (Nav) channel consists of an ion-conducting pore-forming alpha subunit functional on its own that is regulated by one or more beta subunits. Interacts with SCN1A; regulatory subunit of SCN1A/Nav1.1. Interacts with SCN3A; regulatory subunit of SCN3A/Nav1.3. Interacts with SCN4A; regulatory subunit of SCN4A/Nav1.4. Interacts with SCN5A; regulatory subunit of SCN5A/Nav1.5. Interacts with SCN8A; regulatory subunit of SCN8A/Nav1.6. Interacts with SCN9A; regulatory subunit of SCN9A/Nav1.7. Interacts with SCN10A; regulatory subunit of SCN10A/Nav1.8. Interacts with NFASC. Interacts with TMEM65.

It localises to the cell membrane. The protein resides in the perikaryon. Its subcellular location is the cell projection. It is found in the axon. Functionally, regulatory subunit of multiple voltage-gated sodium (Nav) channels directly mediating the depolarization of excitable membranes. Navs, also called VGSCs (voltage-gated sodium channels) or VDSCs (voltage-dependent sodium channels), operate by switching between closed and open conformations depending on the voltage difference across the membrane. In the open conformation they allow Na(+) ions to selectively pass through the pore, along their electrochemical gradient. The influx of Na+ ions provokes membrane depolarization, initiating the propagation of electrical signals throughout cells and tissues. The accessory beta subunits participate in localization and functional modulation of the Nav channels. Modulates the activity of SCN1A/Nav1.1, SCN2A/Nav1.2, SCN3A/Nav1.3, SCN4A/Nav1.4, SCN5A/Nav1.5, SCN8A/Nav1.6, SCN9A/Nav1.7 and SCN10A/Nav1.8. The sequence is that of Sodium channel regulatory subunit beta-1 from Canis lupus familiaris (Dog).